The following is a 373-amino-acid chain: Zinc finger protein CONSTANS (373 aa).

The B box-type 1; atypical zinc finger occupies 15 to 57 (NRARPCDTCRSNACTVYCHADSAYLCMSCDAQVHSANRVASRH). Zn(2+) contacts are provided by Cys20, Cys23, Cys43, His48, Cys63, Cys66, Cys86, and His91. The segment at 58-108 (KRVRVCESCERAPAAFLCEADDASLCTACDSEVHSANPLARRHQRVPILPI) adopts a B box-type 2; atypical zinc-finger fold. Over residues 109 to 120 (SGNSFSSMTTTH) the composition is skewed to polar residues. The segment at 109–130 (SGNSFSSMTTTHHQSEKTMTDP) is disordered. Residues 121–130 (HQSEKTMTDP) show a composition bias toward basic and acidic residues. A CCT domain is found at 306–348 (REARVLRYREKRKTRKFEKTIRYASRKAYAEIRPRVNGRFAKR).

This sequence belongs to the CONSTANS family. In terms of assembly, interacts with ADO3, SPA1, SPA2, SPA3 and SPA4. Interacts with MRG1 and MRG2 (via MRG domain). Interacts (via B-box) with MIP1A. Interacts with AS1 to form a functional complex regulating FT expression. Interacts with NFYC9. Component of a red light-dependent nuclear complex made of PHL, PHYB and CO. Interacts directly with PHL in the presence of PHYB. Expressed in leaves, shoots and shoot apical meristem. Detected in the vascular tissue of the hypocotyl, the cotyledons and the leaves. Restricted to the protoxylem and phloem in young inflorescence stems and to the phloem only in older inflorescences. Also detected in the vascular tissue of the root.

Its subcellular location is the nucleus. Functionally, transcription factor that acts in the long day flowering pathway and may mediate between the circadian clock and the control of flowering. Plays a role in the regulation of flowering time by acting on 'SUPPRESSOR OF OVEREXPRESSION OF CO1', 'TERMINAL FLOWER 1' and 'FLOWERING LOCUS T'. Also regulates P5CS2 and ACS10 (involved in proline and ethylene biosynthesis, respectively). Regulates the expression of NAKR1 by binding to the 5'-TGTG(N2-3)ATG-3' motif. The protein is Zinc finger protein CONSTANS of Arabidopsis thaliana (Mouse-ear cress).